The sequence spans 390 residues: Ribonucleoside-diphosphate reductase subunit M2 (390 aa).

Position 20 is a phosphoserine (Ser20). Thr33 is modified (phosphothreonine). The Cy motif lies at Arg49–Ile51. Residues Asp139, Glu170, and His173 each contribute to the Fe cation site. Tyr177 is a catalytic residue. Fe cation-binding residues include Glu233, Glu267, and His270.

The protein belongs to the ribonucleoside diphosphate reductase small chain family. As to quaternary structure, heterodimer of a large and a small subunit. Interacts (via Cy motif and when phosphorylated at Thr-33) with CCNF; the interaction occurs exclusively in G2 and early M. It depends on Fe cation as a cofactor. In terms of processing, phosphorylation on Ser-20 relieves the inhibitory effect on Wnt signaling. Phosphorylated on Thr-33 by CDK1 and CDK2; predominantly in G2 and M phase. Ubiquitinated by the SCF(CCNF) E3 ubiquitin-protein ligase complex; leading to its degradation by the proteasome.

It localises to the cytoplasm. The protein resides in the nucleus. It catalyses the reaction a 2'-deoxyribonucleoside 5'-diphosphate + [thioredoxin]-disulfide + H2O = a ribonucleoside 5'-diphosphate + [thioredoxin]-dithiol. In terms of biological role, provides the precursors necessary for DNA synthesis. Catalyzes the biosynthesis of deoxyribonucleotides from the corresponding ribonucleotides. Inhibits Wnt signaling. The protein is Ribonucleoside-diphosphate reductase subunit M2 (Rrm2) of Rattus norvegicus (Rat).